The sequence spans 313 residues: Protein PALE CRESS, chloroplastic (313 aa).

The transit peptide at 1 to 22 (MAATSLVLTCASPLFSSPRVIS) directs the protein to the chloroplast.

As to expression, expressed in green tissues, including leaves. Accumulates in chloroplasts of mature stomatal guard cells.

Its subcellular location is the plastid. The protein localises to the chloroplast. The protein resides in the chromoplast. It localises to the etioplast. It is found in the amyloplast. Required for the differentiation of chloroplast from proplastids or etioplasts, probably by modulating some chloroplast-encoded genes expression and mRNA maturation. Involved in leaf-cells differentiation. The protein is Protein PALE CRESS, chloroplastic (PAC) of Arabidopsis thaliana (Mouse-ear cress).